Reading from the N-terminus, the 321-residue chain is Gap junction delta-2 protein (321 aa).

At 1–19 the chain is on the cytoplasmic side; that stretch reads MGEWTILERLLEAAVQQHS. Residues 20 to 42 traverse the membrane as a helical segment; sequence TMIGRILLTVVVIFRILIVAIVG. Residues 43–75 are Extracellular-facing; the sequence is ETVYDDEQTMFVCNTLQPGCNQACYDRAFPISH. A helical transmembrane segment spans residues 76–98; the sequence is IRYWVFQIIMVCTPSLCFITYSV. Residues 99-197 are Cytoplasmic-facing; sequence HQSAKQRERR…KLRRQEGISR (99 aa). A disordered region spans residues 117 to 141; that stretch reads DRDPPESMGGPGGTGGGGSGGGKRE. Over residues 125 to 137 the composition is skewed to gly residues; it reads GGPGGTGGGGSGG. Residues 198 to 220 traverse the membrane as a helical segment; it reads FYIIQVVFRNALEIGFLVGQYFL. Over 221 to 252 the chain is Extracellular; sequence YGFSVPGLYECDRYPCIKEVECYVSRPTEKTV. A helical membrane pass occupies residues 253-275; it reads FLVFMFAVSGICVVLNLAELNHL. Residues 276–321 are Cytoplasmic-facing; that stretch reads GWRKIKLAVRGAQAKRKSVYEIRNKDLPRVSVPNFGRTQSSDSAYV.

Belongs to the connexin family. Delta-type subfamily. In terms of assembly, a connexon is composed of a hexamer of connexins.

Its subcellular location is the cell membrane. It is found in the cell junction. The protein localises to the gap junction. Functionally, one gap junction consists of a cluster of closely packed pairs of transmembrane channels, the connexons, through which materials of low MW diffuse from one cell to a neighboring cell. This Bos taurus (Bovine) protein is Gap junction delta-2 protein (GJD2).